An 87-amino-acid chain; its full sequence is Beta-toxin CsE3 (87 aa).

The N-terminal stretch at Met1–Ala19 is a signal peptide. Residues Lys20–Asn85 enclose the LCN-type CS-alpha/beta domain. 4 disulfide bridges follow: Cys31/Cys84, Cys35/Cys60, Cys44/Cys65, and Cys48/Cys67. Asn85 carries the asparagine amide modification.

The protein belongs to the long (4 C-C) scorpion toxin superfamily. Sodium channel inhibitor family. Beta subfamily. In terms of tissue distribution, expressed by the venom gland.

The protein resides in the secreted. Functionally, beta toxins bind voltage-independently at site-4 of sodium channels (Nav) and shift the voltage of activation toward more negative potentials thereby affecting sodium channel activation and promoting spontaneous and repetitive firing. In Centruroides sculpturatus (Arizona bark scorpion), this protein is Beta-toxin CsE3.